A 370-amino-acid chain; its full sequence is MREETAEQPAPLRSGLTTGSCATATSLAAARLLLCGQVSDAVEIVLPKGKQVQMRLEFCRLVDNFAEAATLKDAGDDPDVTHGALVFARVRLQAAAGVRFLAGAGVGTVTRPGLVLAVGEPAINPVPRRMMTEHLLQLAEEQGYSGGFEVTIGVEGGEALALKTMNPRLGILGGLSILGTSGIVRPFSCAAYIASIHQGIDVATTNGYRHIAACTGNASEDTMRRVYKIPDIALIEMGDFVGAVLKHLRRVSVDKLSVCGGFGKISKLAAGHMDLHSRHSSIDLPQLARWAADVGADAGLQQQILAANTSQQALAMSAAAGVPLGDEVCRHALNFARSIVPASVQVEVFAIDRQGGLVGQAGVDSQREIT.

Belongs to the CbiD family.

It carries out the reaction Co-precorrin-5B + S-adenosyl-L-methionine = Co-precorrin-6A + S-adenosyl-L-homocysteine. Its pathway is cofactor biosynthesis; adenosylcobalamin biosynthesis; cob(II)yrinate a,c-diamide from sirohydrochlorin (anaerobic route): step 6/10. Its function is as follows. Catalyzes the methylation of C-1 in cobalt-precorrin-5B to form cobalt-precorrin-6A. This is Cobalt-precorrin-5B C(1)-methyltransferase from Pseudomonas syringae pv. syringae (strain B728a).